The chain runs to 107 residues: Glutaredoxin 4 (107 aa).

The 103-residue stretch at 4–106 folds into the Glutaredoxin domain; that stretch reads LDKIKKQISE…TLLAEVAAKH (103 aa). Residue K21 coordinates glutathione. C29 is a binding site for [2Fe-2S] cluster. Residues R58, F70, and 83–84 contribute to the glutathione site; that span reads CD.

Belongs to the glutaredoxin family. Monothiol subfamily. In terms of assembly, homodimer.

It is found in the cytoplasm. Its function is as follows. Monothiol glutaredoxin involved in the biogenesis of iron-sulfur clusters. In Haemophilus influenzae (strain ATCC 51907 / DSM 11121 / KW20 / Rd), this protein is Glutaredoxin 4 (grxD).